A 505-amino-acid polypeptide reads, in one-letter code: Cytochrome P450 76A2 (505 aa).

Cys-448 serves as a coordination point for heme.

This sequence belongs to the cytochrome P450 family. The cofactor is heme.

The chain is Cytochrome P450 76A2 (CYP76A2) from Solanum melongena (Eggplant).